A 426-amino-acid polypeptide reads, in one-letter code: Testicular acid phosphatase (426 aa).

The first 26 residues, 1–26 (MAGLGFWGHPAGPLLLLLLLVLPPRA), serve as a signal peptide directing secretion. At 27–393 (LPEGPLVFVA…AAIPPAPVVP (367 aa)) the chain is on the extracellular side. His-41 functions as the Nucleophile in the catalytic mechanism. 3 cysteine pairs are disulfide-bonded: Cys-159–Cys-378, Cys-214–Cys-312, and Cys-353–Cys-357. N-linked (GlcNAc...) asparagine glycosylation is found at Asn-191 and Asn-269. Asp-289 serves as the catalytic Proton donor. N-linked (GlcNAc...) asparagine glycosylation is found at Asn-330 and Asn-339. The chain crosses the membrane as a helical span at residues 394-414 (LLAGAVAVLVALSLGLGLLAW). The Cytoplasmic portion of the chain corresponds to 415-426 (RPGCLRALGGPV).

This sequence belongs to the histidine acid phosphatase family. Homodimer. In terms of processing, glycosylated. As to expression, expressed mainly in the testis. Also expressed in the brain where they are enriched at the postsynaptic sites. Expressed at lower levels in the trachea, prostate, bone marrow, spinal cord, colon, fetal brain, heart, thymus, fetal liver, spleen, leukocytes, ovary, small intestine, pancreas and skeletal muscle. Expression is significantly lower in testicular cancer tissues than in normal testicular tissues. Isoform 3 is expressed in the testis, trachea, prostate and bone marrow.

The protein localises to the membrane. It catalyses the reaction a phosphate monoester + H2O = an alcohol + phosphate. In terms of biological role, may dephosphorylate receptor tyrosine-protein kinase ERBB4 and inhibits its ligand-induced proteolytic cleavage. May play a role in odontogenesis. The polypeptide is Testicular acid phosphatase (Homo sapiens (Human)).